A 900-amino-acid polypeptide reads, in one-letter code: Nonribosomal peptide synthetase AMT10 (900 aa).

The adenylation stretch occupies residues 284-686; sequence KQAQQNPAAM…ARRNGYIKLR (403 aa). In terms of domain architecture, Carrier spans 824–900; the sequence is ELQSDMERYL…QMARNCSLLD (77 aa). Serine 861 bears the O-(pantetheine 4'-phosphoryl)serine mark.

It belongs to the NRP synthetase family.

The protein operates within mycotoxin biosynthesis. In terms of biological role, nonribosomal peptide synthetase; part of the gene clusters that mediate the biosynthesis of AM-toxins, host-selective toxins (HSTs) causing Alternaria blotch on apple, a worldwide distributed disease. AM-toxins are cyclic depsipeptides containing the 3 residues 2-hydroxy-isovaleric acid (2-HIV), dehydroalanine, L-alanine which are common for all 3 AM-toxins I to III. The fourth precursor is L-alpha-amino-methoxyphenyl-valeric acid (L-Amv) for AM-toxin I, L-alpha-amino-phenyl-valeric acid (L-Apv) for AM-toxin II, and L-alpha-amino-hydroxyphenyl-valeric acid (L-Ahv) for AM-toxin III. AM-toxins have two target sites for affecting susceptible apple cells; they cause invagination of the plasma membrane and electrolyte loss and chloroplast disorganization. The non-ribosomal peptide synthetase AMT1 contains 4 catalytic modules and is responsible for activation of each residue in AM-toxin. The aldo-keto reductase AMT2 catalyzes the conversion of 2-keto-isovaleric acid (2-KIV) to 2-hydroxy-isovaleric acid (2-HIV), one of the precursor residues incorporated by AMT1 during AM-toxin biosynthesis, by reduction of its ketone to an alcohol. The cytochrome P450 monooxygenase AMT3 and the thioesterase AMT4 are also important for AM-toxin production, but their exact function within the AM-toxin biosynthesis are not known yet. Up to 21 proteins (including AMT1 to AMT4) are predicted to be involved in AM-toxin biosynthesis since their expression ishighly up-regulated in AM-toxin-producing cultures. This is Nonribosomal peptide synthetase AMT10 from Alternaria alternata (Alternaria rot fungus).